The following is a 201-amino-acid chain: MSRYRGPRFKKIRRLGALPGLTRKTPKSGSNLKKKFHSGKKEQYRIRLQEKQKLRFHYGLTERQLLRYVHIAGKAKSSTGQVLLQLLEMRLDNILFRLGMASTIPEARQLVNHRHILVNGRIVDIPSFRCKPRDIITTKDNQRSKRLVQNSIASSDPGKLPKHLTIDTLQYKGLVKKILDRKWVGLKINELLVVEYYSRQT.

A disordered region spans residues 20–39 (GLTRKTPKSGSNLKKKFHSG). One can recognise an S4 RNA-binding domain in the interval 89 to 150 (MRLDNILFRL…NQRSKRLVQN (62 aa)).

This sequence belongs to the universal ribosomal protein uS4 family. In terms of assembly, part of the 30S ribosomal subunit. Contacts protein S5. The interaction surface between S4 and S5 is involved in control of translational fidelity.

It is found in the plastid. Its subcellular location is the chloroplast. Functionally, one of the primary rRNA binding proteins, it binds directly to 16S rRNA where it nucleates assembly of the body of the 30S subunit. In terms of biological role, with S5 and S12 plays an important role in translational accuracy. The chain is Small ribosomal subunit protein uS4c (rps4) from Oryza nivara (Indian wild rice).